Consider the following 471-residue polypeptide: Paraneoplastic antigen-like protein 8A (471 aa).

Disordered regions lie at residues 188-300 and 321-471; these read SAAG…EGSA and ASRG…PSAV. Positions 238 to 247 are enriched in basic residues; it reads HSRRKRQKKT. Low complexity predominate over residues 256–269; that stretch reads KKSQGSHSHSSASL. A compositionally biased stretch (basic and acidic residues) spans 270–287; sequence KHPEADDGKNRERLEHVR.

The protein belongs to the PNMA family.

The polypeptide is Paraneoplastic antigen-like protein 8A (PNMA8A) (Bos taurus (Bovine)).